A 610-amino-acid polypeptide reads, in one-letter code: UvrABC system protein C (610 aa).

Positions 16-94 (SQPGVYRMYD…IKLYQPRYNV (79 aa)) constitute a GIY-YIG domain. The UVR domain maps to 204-239 (QQVLTRLIERMEQASQQLKFEDAARYRDQIQAVRQV).

It belongs to the UvrC family. In terms of assembly, interacts with UvrB in an incision complex.

It is found in the cytoplasm. In terms of biological role, the UvrABC repair system catalyzes the recognition and processing of DNA lesions. UvrC both incises the 5' and 3' sides of the lesion. The N-terminal half is responsible for the 3' incision and the C-terminal half is responsible for the 5' incision. The protein is UvrABC system protein C of Photorhabdus laumondii subsp. laumondii (strain DSM 15139 / CIP 105565 / TT01) (Photorhabdus luminescens subsp. laumondii).